The primary structure comprises 301 residues: 4-diphosphocytidyl-2-C-methyl-D-erythritol kinase (301 aa).

Lysine 10 is a catalytic residue. Residue 96-106 participates in ATP binding; it reads PMGGGVGGGSS. Residue aspartate 138 is part of the active site.

It belongs to the GHMP kinase family. IspE subfamily.

It catalyses the reaction 4-CDP-2-C-methyl-D-erythritol + ATP = 4-CDP-2-C-methyl-D-erythritol 2-phosphate + ADP + H(+). Its pathway is isoprenoid biosynthesis; isopentenyl diphosphate biosynthesis via DXP pathway; isopentenyl diphosphate from 1-deoxy-D-xylulose 5-phosphate: step 3/6. Its function is as follows. Catalyzes the phosphorylation of the position 2 hydroxy group of 4-diphosphocytidyl-2C-methyl-D-erythritol. The protein is 4-diphosphocytidyl-2-C-methyl-D-erythritol kinase of Alcanivorax borkumensis (strain ATCC 700651 / DSM 11573 / NCIMB 13689 / SK2).